A 448-amino-acid chain; its full sequence is uncharacterized protein (448 aa).

The uDENN domain maps to 4–155; the sequence is QAIVLATFDA…SAVNLEFDSL (152 aa). In terms of domain architecture, cDENN spans 183 to 326; it reads LDHLGPAFYC…FKGLSRYLSF (144 aa). Positions 328–428 constitute a dDENN domain; that stretch reads GESSWGLTTY…WQYGKYFWLR (101 aa). The helical transmembrane segment at 425–447 threads the bilayer; sequence FWLRRVSLIFLASTCFLFILWKL.

It is found in the golgi apparatus membrane. Its subcellular location is the endoplasmic reticulum membrane. This is an uncharacterized protein from Schizosaccharomyces pombe (strain 972 / ATCC 24843) (Fission yeast).